Reading from the N-terminus, the 758-residue chain is MTTLHFSGFPRVGAFRELKFAQEKYWRKEISEQELLAVAKDLREKNWKHQVAANADFVAVGDFTFYDHILDLQVATGAIPARFGFDSQNLSLEQFFQLARGNKDQFAIEMTKWFDTNYHYLVPEFHADTEFKANAKHYVQQLQEAQALGLKAKPTVVGPLTFLWVGKEKGAVEFDRLSLLPKLLPVYVEILTALVEAGAEWIQIDEPALAVDLPKEWVEAYKDVYATLSKVSAKILLSTYFGSVAEHAALLKALPVDGLHIDLVRAPEQLDAFADYDKVLSAGVIDGRNIWRANLNKVLETVEPLQAKLGDRLWISSSCSLLHTPFDLSVEEKLKANKPDLYSWLAFTLQKTQELRVLKAALNEGRDSVAEELAASQAAADSRANSSEIHRADVAKRLADLPANADQRKSPFADRIKAQQAWLNLPLLPTTNIGSFPQTTEIRQARSAFKKGELSAADYEAAMKKEIALVVEEQEKLDLDVLVHGEAERNDMVEYFGELLSGFAFTQYGWVQSYGSRCVKPPIIFGDVSRPEAMTVAWSTYAQSLTKRPMKGMLTGPVTILQWSFVRNDIPRSTVCKQIALALNDEVLDLEKAGIKVIQIDEPAIREGLPLKRADWDAYLNWAGESFRLSSAGCEDSTQIHTHMCYSEFNDILPAIAAMDADVITIETSRSDMELLTAFGEFQYPNDIGPGVYDIHSPRVPTEAEVEHLLRKAIEVVPVERLWVNPDCGLKTRGWKETLEQLQVMMNVTRKLRAELAK.

5-methyltetrahydropteroyltri-L-glutamate contacts are provided by residues 16-19 (RELK) and Lys112. Residues 433 to 435 (IGS) and Glu486 contribute to the L-homocysteine site. L-methionine contacts are provided by residues 433 to 435 (IGS) and Glu486. Residues 517 to 518 (RC) and Trp563 contribute to the 5-methyltetrahydropteroyltri-L-glutamate site. Asp601 lines the L-homocysteine pocket. Asp601 serves as a coordination point for L-methionine. Glu607 contributes to the 5-methyltetrahydropteroyltri-L-glutamate binding site. 3 residues coordinate Zn(2+): His643, Cys645, and Glu667. His696 (proton donor) is an active-site residue. Cys728 contributes to the Zn(2+) binding site.

The protein belongs to the vitamin-B12 independent methionine synthase family. Zn(2+) serves as cofactor.

It carries out the reaction 5-methyltetrahydropteroyltri-L-glutamate + L-homocysteine = tetrahydropteroyltri-L-glutamate + L-methionine. The protein operates within amino-acid biosynthesis; L-methionine biosynthesis via de novo pathway; L-methionine from L-homocysteine (MetE route): step 1/1. In terms of biological role, catalyzes the transfer of a methyl group from 5-methyltetrahydrofolate to homocysteine resulting in methionine formation. This is 5-methyltetrahydropteroyltriglutamate--homocysteine methyltransferase from Neisseria meningitidis serogroup B (strain ATCC BAA-335 / MC58).